Consider the following 316-residue polypeptide: Oligopeptide transport system permease protein AppB (316 aa).

The next 6 membrane-spanning stretches (helical) occupy residues 10-30 (LMSIPILLGITILSFVIMKAA), 100-120 (LLLMLVSTILALMISIPFGVL), 138-158 (FIGLAIPNFWFGLILIMVLSV), 177-197 (IFDRIHHLILPAFVLATADMA), 240-260 (LPVITIFGLMIPSFIGGSVVV), and 290-310 (VISAVLVVVGNLIADILYAIV). The 208-residue stretch at 96 to 303 (LPNTLLLMLV…VLVVVGNLIA (208 aa)) folds into the ABC transmembrane type-1 domain.

It belongs to the binding-protein-dependent transport system permease family. OppBC subfamily.

The protein localises to the cell membrane. Its function is as follows. This protein is a component of an oligopeptide permease, a binding protein-dependent transport system. This APP system can completely substitute for the OPP system in both sporulation and genetic competence, though, unlike OPP, is incapable of transporting tripeptides. Probably responsible for the translocation of the substrate across the membrane. In Bacillus subtilis (strain 168), this protein is Oligopeptide transport system permease protein AppB (appB).